Reading from the N-terminus, the 347-residue chain is Acetylglutamate kinase, chloroplastic (347 aa).

A chloroplast-targeting transit peptide spans 1 to 50 (MATVTSNASPKSFSFTVSNPFKTLIPNKSPSLCYPTRNKNHHRLGFSIKA). An N-acetylthreonine modification is found at threonine 51. 94 to 95 (GA) is a binding site for ATP. N-acetyl-L-glutamate contacts are provided by residues glycine 126, arginine 148, and 242 to 245 (NINA). L-arginine is bound at residue lysine 260. ATP is bound by residues 265–266 (TD) and leucine 271. Residue lysine 282 participates in L-arginine binding. Position 297-305 (297-305 (KVAGGMIPK)) interacts with ATP. Residues 334 to 337 (EIMS) and glycine 342 each bind L-arginine.

This sequence belongs to the acetylglutamate kinase family. ArgB subfamily. Interacts with GLB1. Interaction is dependent of MgATP and inhibited by 2-oxoglutarate, arginine, glutamate, citrate, and oxaloacetate.

The protein resides in the plastid. It is found in the chloroplast stroma. It catalyses the reaction N-acetyl-L-glutamate + ATP = N-acetyl-L-glutamyl 5-phosphate + ADP. It functions in the pathway amino-acid biosynthesis; L-arginine biosynthesis; N(2)-acetyl-L-ornithine from L-glutamate: step 2/4. Inhibited by arginine. Inhibition is relieved by binding to GLB1. Involved in the arginine biosynthetic pathway via the intermediate compound ornithine. This chain is Acetylglutamate kinase, chloroplastic, found in Arabidopsis thaliana (Mouse-ear cress).